Reading from the N-terminus, the 77-residue chain is SS18-like protein 2 (77 aa).

Residues 50–53 (YQHV) carry the SH2-binding motif.

The protein belongs to the SS18 family.

The polypeptide is SS18-like protein 2 (Ss18l2) (Mus musculus (Mouse)).